A 378-amino-acid polypeptide reads, in one-letter code: Putative F-box protein At3g24580 (378 aa).

Residues 1-47 enclose the F-box domain; the sequence is MTKMSNLPNDLAEEVLSRVSLTSLRNVRLTCKDWNTLSKGESFAKNH.

The polypeptide is Putative F-box protein At3g24580 (Arabidopsis thaliana (Mouse-ear cress)).